The following is a 1580-amino-acid chain: Ras GTPase-activating protein raskol (1580 aa).

Ser164 bears the Phosphoserine mark. Position 167 is a phosphothreonine (Thr167). The tract at residues Leu197 to Glu223 is disordered. Phosphoserine is present on residues Ser221 and Ser224. A PH domain is found at Ser233 to Ala291. One can recognise a C2 domain in the interval Trp282 to Tyr400. One can recognise a Ras-GAP domain in the interval Gly490–Ile700. 7 disordered regions span residues Gly764 to His819, Leu857 to Pro892, Ala904 to Asp1023, Ala1112 to Gly1218, Leu1284 to Leu1313, Val1334 to Ser1443, and Tyr1561 to Gln1580. Residues Ala776 to Glu805 are compositionally biased toward polar residues. Composition is skewed to low complexity over residues Gln806–Gln818, Leu857–Gln885, and Ser926–Gly939. Over residues His940–His954 the composition is skewed to basic residues. The segment covering Thr987–Ser1020 has biased composition (low complexity). Residues Ser1140–Tyr1150 are compositionally biased toward polar residues. The span at Gln1151–Gln1169 shows a compositional bias: low complexity. Ser1158 and Ser1164 each carry phosphoserine. Over residues Pro1186–His1206 the composition is skewed to polar residues. Low complexity-rich tracts occupy residues Gln1207–Gln1216, Ser1285–Ser1299, and His1351–Gln1362. Residues Gln1363–Gln1372 are compositionally biased toward basic and acidic residues. Low complexity predominate over residues Ala1374–Ala1388. A compositionally biased stretch (polar residues) spans Ser1396–Gln1415. Phosphoserine occurs at positions 1401 and 1403. The segment covering Gly1427 to Gln1438 has biased composition (gly residues). The span at Thr1563 to Gln1580 shows a compositional bias: low complexity.

The protein localises to the cytoplasm. The protein resides in the cell membrane. Its subcellular location is the apical cell membrane. GTPase-activating protein, which acts as a negative regulator for some members of the Ras family. Probably decreases their signaling activity by stimulating their intrinsic GTPase activity, thereby lowering the levels of the GTP-bound active form. Functions with DE-cadherin (shg) to promote embryonic border cell (BC) migration and adhesion by regulating the distribution of actin protrusions in BCs. Promotes shg-mediated adhesion at the BC interfaces and likely maintains BC cluster adhesion during BC detachment from the follicular epithelium and subsequent BC migration. Also required for restricting the development of actin-rich protrusions to the front of migrating BC clusters thus ensuring unidirectional BC migration. Possibly functions by suppressing Rac1 signaling in non-leading BCs, thus limiting its activity to leading BCs where it initiates localized actin cytoskeleton remodeling to produce the polarized protrusions. The protein is Ras GTPase-activating protein raskol of Drosophila melanogaster (Fruit fly).